Here is an 854-residue protein sequence, read N- to C-terminus: SH2 domain-containing protein 3C (854 aa).

Position 22 is a phosphoserine (S22). Positions 34–43 (RSSASASIRS) are enriched in low complexity. The disordered stretch occupies residues 34–129 (RSSASASIRS…AKEAGEGTEA (96 aa)). The span at 99–124 (EVSRESHLVSRRLPEPPDLEAAKEAG) shows a compositional bias: basic and acidic residues. One can recognise an SH2 domain in the interval 215 to 314 (WYHGRIPREV…QSGAIIYCPV (100 aa)). 2 positions are modified to phosphotyrosine: Y273 and Y278. 3 disordered regions span residues 330-384 (SQGS…PRDS), 398-417 (LHSP…YSTV), and 422-520 (APSA…ERQK). Residues 333–347 (SSKTASPASPSGSKG) show a composition bias toward low complexity. S354 bears the Phosphoserine mark. Composition is skewed to low complexity over residues 400–415 (SPLS…PAYS), 422–436 (APSA…PASP), and 474–485 (SPSPSLSSYSDP). S435 bears the Phosphoserine mark. Residues 508–520 (TPRKARGSGERQK) show a composition bias toward basic and acidic residues. Residues 580-848 (DARTLARHVT…TALSHKLEPA (269 aa)) form the Ras-GEF domain. Y787 bears the Phosphotyrosine mark.

Component of a complex comprised of SH2D3C, BCAR1/CAS, and CRK. Within the complex, interacts with CRK and (via C-terminus) with BCAR1/CAS (via C-terminus). Interacts with NEDD9/HEF1. Interacts with EPHB2. As to quaternary structure, interacts with NEDD9/HEF1. Interacts with BCAR1/CAS. Interacts with PTK2B. In terms of assembly, interacts (via C-terminus) with BCAR1/CAS (via C-terminus). Interacts with IGF1. Post-translationally, phosphorylated by MAPK/ERK upon T-cell receptor stimulation in T-cells. As to expression, expressed in the olfactory bulb and olfactory sensory neurons (at protein level). Expressed in B cells (at protein level). Expressed in T lymphocytes. Expressed in hematopoietic cells from spleen, lymph node and thymus (at protein level). Expressed weakly in the lung (at protein level). In terms of tissue distribution, expressed in the brain, lung, kidney, and weakly expressed in the liver and lung (at protein level).

The protein resides in the cytoplasm. It is found in the cell membrane. The protein localises to the cell projection. It localises to the axon. Its subcellular location is the ruffle membrane. Acts as an adapter protein that mediates cell signaling pathways involved in cellular functions such as cell adhesion and migration, tissue organization, and the regulation of the immune response. Plays a role in integrin-mediated cell adhesion through BCAR1-CRK-RAPGEF1 signaling and activation of the small GTPase RAP1. Promotes cell migration and invasion through the extracellular matrix. Required for marginal zone B-cell development and thymus-independent type 2 immune responses. Mediates migration and adhesion of B cells in the splenic marginal zone via promoting hyperphosphorylation of NEDD9/CASL. Plays a role in CXCL13-induced chemotaxis of B-cells. Plays a role in the migration of olfactory sensory neurons (OSNs) into the forebrain and the innervation of the olfactory bulb by the OSN axons during development. Required for the efficient tyrosine phosphorylation of BCAR1 in OSN axons. In terms of biological role, important regulator of chemokine-induced, integrin-mediated T lymphocyte adhesion and migration, acting upstream of RAP1. Required for tissue-specific adhesion of T lymphocytes to peripheral tissues. Required for basal and CXCL2 stimulated serine-threonine phosphorylation of NEDD9. May be involved in the regulation of T-cell receptor-mediated IL2 production through the activation of the JNK pathway in T-cells. Functionally, may be involved in the BCAR1/CAS-mediated JNK activation pathway. The chain is SH2 domain-containing protein 3C (Sh2d3c) from Mus musculus (Mouse).